The sequence spans 304 residues: Opsin-1 (304 aa).

The Extracellular segment spans residues 1-45 (MIHPEQVADMLRPTTSTTSSHVPGPVPTVVPTPTEYQTLGETGHR). The chain crosses the membrane as a helical span at residues 46–66 (TLWVTFALMVLSSGIFALLSW). The helical transmembrane segment at 74-94 (LFHVITTLITVVASLSYFAMA) threads the bilayer. Residues 129-149 (YVDWALTTPLLLLELCLLAGV) form a helical membrane-spanning segment. Residues 154–174 (TLMAIVADVIMVLCGLFAALG) traverse the membrane as a helical segment. Residues 183–203 (WGWYTIGCFSYLFVIWHVALH) form a helical membrane-spanning segment. A helical transmembrane segment spans residues 219–239 (FTGLAVFALLLWTAYPIIWGI). A helical membrane pass occupies residues 252-272 (ILIYTVLDLLAKPVFGFWLLL). An N6-(retinylidene)lysine modification is found at K263. Residues 273–304 (SHRAMPETNIDLPGYWSHGLATEGRIRIGEED) lie on the Cytoplasmic side of the membrane.

The protein belongs to the archaeal/bacterial/fungal opsin family. Binds all-trans retinal via a protonated Schiff base linkage.

Its subcellular location is the membrane. Functionally, could facilitate a sensory photoresponse. The polypeptide is Opsin-1 (nop-1) (Neurospora crassa (strain ATCC 24698 / 74-OR23-1A / CBS 708.71 / DSM 1257 / FGSC 987)).